Here is a 396-residue protein sequence, read N- to C-terminus: Acetate kinase (396 aa).

Asparagine 8 contributes to the Mg(2+) binding site. Lysine 15 is a binding site for ATP. Arginine 89 is a binding site for substrate. Catalysis depends on aspartate 146, which acts as the Proton donor/acceptor. Residues 206–210, 281–283, and 329–333 contribute to the ATP site; these read HLGNG, DLR, and GIGEN. Glutamate 382 serves as a coordination point for Mg(2+).

It belongs to the acetokinase family. As to quaternary structure, homodimer. Requires Mg(2+) as cofactor. The cofactor is Mn(2+).

It localises to the cytoplasm. The enzyme catalyses acetate + ATP = acetyl phosphate + ADP. Its pathway is metabolic intermediate biosynthesis; acetyl-CoA biosynthesis; acetyl-CoA from acetate: step 1/2. Catalyzes the formation of acetyl phosphate from acetate and ATP. Can also catalyze the reverse reaction. This Geobacillus kaustophilus (strain HTA426) protein is Acetate kinase.